Here is a 429-residue protein sequence, read N- to C-terminus: Trehalose-phosphate phosphatase (429 aa).

D181 serves as the catalytic Nucleophile. Mg(2+) contacts are provided by D181, D183, and D368. Position 181–183 (181–183) interacts with substrate; it reads DFD.

Belongs to the trehalose phosphatase family. The cofactor is Mg(2+).

It catalyses the reaction alpha,alpha-trehalose 6-phosphate + H2O = alpha,alpha-trehalose + phosphate. It functions in the pathway glycan biosynthesis; trehalose biosynthesis. Its function is as follows. Removes the phosphate from trehalose 6-phosphate to produce free trehalose. In Mycobacterium leprae (strain TN), this protein is Trehalose-phosphate phosphatase (otsB).